Here is a 222-residue protein sequence, read N- to C-terminus: Thiopurine S-methyltransferase (222 aa).

Residues tryptophan 10, leucine 45, glutamate 66, and arginine 123 each coordinate S-adenosyl-L-methionine.

This sequence belongs to the class I-like SAM-binding methyltransferase superfamily. TPMT family.

It localises to the cytoplasm. It carries out the reaction S-adenosyl-L-methionine + a thiopurine = S-adenosyl-L-homocysteine + a thiopurine S-methylether.. The chain is Thiopurine S-methyltransferase from Pseudomonas fluorescens (strain ATCC BAA-477 / NRRL B-23932 / Pf-5).